The primary structure comprises 144 residues: Large ribosomal subunit protein uL15 (144 aa).

Residues 1-44 form a disordered region; it reads MNLNELQPAAGSRHVRNRVGRGTSSGNGKTSGRGQKGQKARGKV. A compositionally biased stretch (gly residues) spans 23 to 35; sequence TSSGNGKTSGRGQ.

The protein belongs to the universal ribosomal protein uL15 family. In terms of assembly, part of the 50S ribosomal subunit.

Its function is as follows. Binds to the 23S rRNA. The polypeptide is Large ribosomal subunit protein uL15 (Leuconostoc mesenteroides subsp. mesenteroides (strain ATCC 8293 / DSM 20343 / BCRC 11652 / CCM 1803 / JCM 6124 / NCDO 523 / NBRC 100496 / NCIMB 8023 / NCTC 12954 / NRRL B-1118 / 37Y)).